The following is a 155-amino-acid chain: Small ribosomal subunit protein uS7 (155 aa).

The protein belongs to the universal ribosomal protein uS7 family. Part of the 30S ribosomal subunit. Contacts proteins S9 and S11.

One of the primary rRNA binding proteins, it binds directly to 16S rRNA where it nucleates assembly of the head domain of the 30S subunit. Is located at the subunit interface close to the decoding center, probably blocks exit of the E-site tRNA. The chain is Small ribosomal subunit protein uS7 from Thermotoga maritima (strain ATCC 43589 / DSM 3109 / JCM 10099 / NBRC 100826 / MSB8).